The following is an 841-amino-acid chain: DNA ligase (841 aa).

Residues 54 to 58 (DAEYD), 103 to 104 (SL), and E143 each bind NAD(+). K145 acts as the N6-AMP-lysine intermediate in catalysis. The NAD(+) site is built by R166, E203, K321, and K345. The Zn(2+) site is built by C471, C474, C489, and C495. Positions 554-575 (KTVAESDQMPSEGSSVGASGKH) are disordered. Residues 561 to 570 (QMPSEGSSVG) show a composition bias toward polar residues. A BRCT domain is found at 764–841 (GINKAVAGKT…SEAELLTLLG (78 aa)).

The protein belongs to the NAD-dependent DNA ligase family. LigA subfamily. The cofactor is Mg(2+). Requires Mn(2+) as cofactor.

The enzyme catalyses NAD(+) + (deoxyribonucleotide)n-3'-hydroxyl + 5'-phospho-(deoxyribonucleotide)m = (deoxyribonucleotide)n+m + AMP + beta-nicotinamide D-nucleotide.. DNA ligase that catalyzes the formation of phosphodiester linkages between 5'-phosphoryl and 3'-hydroxyl groups in double-stranded DNA using NAD as a coenzyme and as the energy source for the reaction. It is essential for DNA replication and repair of damaged DNA. The chain is DNA ligase from Neisseria meningitidis serogroup C / serotype 2a (strain ATCC 700532 / DSM 15464 / FAM18).